Consider the following 481-residue polypeptide: Aspartyl/glutamyl-tRNA(Asn/Gln) amidotransferase subunit B (481 aa).

Belongs to the GatB/GatE family. GatB subfamily. In terms of assembly, heterotrimer of A, B and C subunits.

It catalyses the reaction L-glutamyl-tRNA(Gln) + L-glutamine + ATP + H2O = L-glutaminyl-tRNA(Gln) + L-glutamate + ADP + phosphate + H(+). The catalysed reaction is L-aspartyl-tRNA(Asn) + L-glutamine + ATP + H2O = L-asparaginyl-tRNA(Asn) + L-glutamate + ADP + phosphate + 2 H(+). Functionally, allows the formation of correctly charged Asn-tRNA(Asn) or Gln-tRNA(Gln) through the transamidation of misacylated Asp-tRNA(Asn) or Glu-tRNA(Gln) in organisms which lack either or both of asparaginyl-tRNA or glutaminyl-tRNA synthetases. The reaction takes place in the presence of glutamine and ATP through an activated phospho-Asp-tRNA(Asn) or phospho-Glu-tRNA(Gln). The protein is Aspartyl/glutamyl-tRNA(Asn/Gln) amidotransferase subunit B of Ehrlichia chaffeensis (strain ATCC CRL-10679 / Arkansas).